The primary structure comprises 366 residues: Ribosomal RNA large subunit methyltransferase M (366 aa).

S-adenosyl-L-methionine-binding positions include Ser-188, 221 to 224 (CPGG), Asp-240, Asp-260, and Asp-277. Lys-306 (proton acceptor) is an active-site residue.

It belongs to the class I-like SAM-binding methyltransferase superfamily. RNA methyltransferase RlmE family. RlmM subfamily. In terms of assembly, monomer.

The protein resides in the cytoplasm. It carries out the reaction cytidine(2498) in 23S rRNA + S-adenosyl-L-methionine = 2'-O-methylcytidine(2498) in 23S rRNA + S-adenosyl-L-homocysteine + H(+). Catalyzes the 2'-O-methylation at nucleotide C2498 in 23S rRNA. The protein is Ribosomal RNA large subunit methyltransferase M of Salmonella heidelberg (strain SL476).